We begin with the raw amino-acid sequence, 217 residues long: Oxygen-evolving enhancer protein 3-1, chloroplastic (217 aa).

A chloroplast-targeting transit peptide spans methionine 1–alanine 68.

This sequence belongs to the PsbQ family.

It is found in the plastid. The protein resides in the chloroplast thylakoid membrane. The chain is Oxygen-evolving enhancer protein 3-1, chloroplastic (PSBQ1) from Zea mays (Maize).